The following is a 158-amino-acid chain: Cytochrome c-type biogenesis protein CcmE (158 aa).

The Cytoplasmic portion of the chain corresponds to 1 to 23 (MNSQSFKNFPSLKFISKKRRKER). Residues 24 to 44 (LLMVLLCLFIMAITTGLIVYA) form a helical; Signal-anchor for type II membrane protein membrane-spanning segment. Topologically, residues 45 to 158 (MRNTANFFRT…DRLKKHHDIK (114 aa)) are periplasmic. 2 residues coordinate heme: histidine 138 and tyrosine 142.

Belongs to the CcmE/CycJ family.

Its subcellular location is the cell inner membrane. In terms of biological role, heme chaperone required for the biogenesis of c-type cytochromes. Transiently binds heme delivered by CcmC and transfers the heme to apo-cytochromes in a process facilitated by CcmF and CcmH. In Bartonella bacilliformis (strain ATCC 35685 / KC583 / Herrer 020/F12,63), this protein is Cytochrome c-type biogenesis protein CcmE.